The chain runs to 545 residues: CTP synthase (545 aa).

The tract at residues 1-266 (MTTRYIFVTG…DELVIKRFNI (266 aa)) is amidoligase domain. Ser-14 is a binding site for CTP. Ser-14 serves as a coordination point for UTP. ATP-binding positions include 15–20 (SLGKGI) and Asp-72. 2 residues coordinate Mg(2+): Asp-72 and Glu-140. Residues 147 to 149 (DIE), 187 to 192 (KTKPTQ), and Lys-223 each bind CTP. UTP contacts are provided by residues 187–192 (KTKPTQ) and Lys-223. 239 to 241 (KDV) is an ATP binding site. The region spanning 291-542 (TIGMVGKYIE…IAASLSHQKR (252 aa)) is the Glutamine amidotransferase type-1 domain. Position 352 (Gly-352) interacts with L-glutamine. Cys-379 acts as the Nucleophile; for glutamine hydrolysis in catalysis. Residues 380-383 (LGMQ), Glu-403, and Arg-470 contribute to the L-glutamine site. Active-site residues include His-515 and Glu-517.

Belongs to the CTP synthase family. As to quaternary structure, homotetramer.

The enzyme catalyses UTP + L-glutamine + ATP + H2O = CTP + L-glutamate + ADP + phosphate + 2 H(+). It carries out the reaction L-glutamine + H2O = L-glutamate + NH4(+). It catalyses the reaction UTP + NH4(+) + ATP = CTP + ADP + phosphate + 2 H(+). Its pathway is pyrimidine metabolism; CTP biosynthesis via de novo pathway; CTP from UDP: step 2/2. Allosterically activated by GTP, when glutamine is the substrate; GTP has no effect on the reaction when ammonia is the substrate. The allosteric effector GTP functions by stabilizing the protein conformation that binds the tetrahedral intermediate(s) formed during glutamine hydrolysis. Inhibited by the product CTP, via allosteric rather than competitive inhibition. Its function is as follows. Catalyzes the ATP-dependent amination of UTP to CTP with either L-glutamine or ammonia as the source of nitrogen. Regulates intracellular CTP levels through interactions with the four ribonucleotide triphosphates. This is CTP synthase from Shewanella denitrificans (strain OS217 / ATCC BAA-1090 / DSM 15013).